Consider the following 132-residue polypeptide: Prefoldin subunit alpha (132 aa).

This sequence belongs to the prefoldin subunit alpha family. Heterohexamer of two alpha and four beta subunits.

Its subcellular location is the cytoplasm. Functionally, molecular chaperone capable of stabilizing a range of proteins. Seems to fulfill an ATP-independent, HSP70-like function in archaeal de novo protein folding. The polypeptide is Prefoldin subunit alpha (pfdA) (Pyrobaculum aerophilum (strain ATCC 51768 / DSM 7523 / JCM 9630 / CIP 104966 / NBRC 100827 / IM2)).